Reading from the N-terminus, the 156-residue chain is Protein L* (156 aa).

In terms of biological role, may be required for viral persistance in the host. The protein is Protein L* of Theiler's murine encephalomyelitis virus (strain DA) (TMEV).